We begin with the raw amino-acid sequence, 235 residues long: Urease accessory protein UreF (235 aa).

The protein belongs to the UreF family. As to quaternary structure, ureD, UreF and UreG form a complex that acts as a GTP-hydrolysis-dependent molecular chaperone, activating the urease apoprotein by helping to assemble the nickel containing metallocenter of UreC. The UreE protein probably delivers the nickel.

The protein localises to the cytoplasm. In terms of biological role, required for maturation of urease via the functional incorporation of the urease nickel metallocenter. The polypeptide is Urease accessory protein UreF (Haemophilus influenzae (strain PittGG)).